The chain runs to 112 residues: MGYTIQLDKDGDYCWDEDPTHHDPYTQANATSHTAVSRAAMAAPHAAAHHAFHEPFIKLNLTDKNIFNGLGFILIVIFIYLLLITLQQMLTRHIYNTVQHCVKAHLDSKNLQ.

N-linked (GlcNAc...) asparagine; by host glycans are attached at residues Asn29 and Asn60. Residues Ile66–Leu86 traverse the membrane as a helical segment.

This sequence belongs to the asfivirus B117L family.

Its subcellular location is the host membrane. It is found in the virion. This is an uncharacterized protein from African swine fever virus (isolate Tick/South Africa/Pretoriuskop Pr4/1996) (ASFV).